Consider the following 959-residue polypeptide: Nucleoporin NUP100/NSP100 (959 aa).

The segment at 1–104 (MFGNNRPMFG…NSSNASNGNT (104 aa)) is disordered. 3 FG repeats span residues 2–3 (FG), 9–10 (FG), and Gly-17. Positions 12 to 36 (SNLSFGSNTSSFGGQQSQQPNSLFG) are enriched in polar residues. One copy of the SLFG 1; approximate repeat lies at 21–24 (SSFG). The SLFG 2 repeat unit spans residues 33–36 (SLFG). The segment covering 37-48 (NSNNNNNSTSNN) has biased composition (low complexity). The SLFG 3; approximate repeat unit spans residues 51 to 54 (SGFG). Composition is skewed to low complexity over residues 56 to 81 (FTSAAGSNSNSLFGNNNTQNNGAFGQ) and 92 to 104 (GSLNSSNASNGNT). The stretch at 66 to 69 (SLFG) is one SLFG 4 repeat. Residues 77 to 80 (GAFG) form a GLFG 1; approximate repeat. Residues 89–92 (SPFG) form an SLFG 5; approximate repeat. The stretch at 105–106 (FG) is one FG 4 repeat. The GLFG 2; approximate repeat unit spans residues 112-115 (GSFG). Positions 121–136 (AFNNNSNSTNSPFGFN) are enriched in low complexity. Residues 121-172 (AFNNNSNSTNSPFGFNKPNTGGTLFGSQNNNSAGTSSLFGGQSTSTTGTFGN) are disordered. The stretch at 131 to 134 (SPFG) is one SLFG 6; approximate repeat. Positions 137–153 (KPNTGGTLFGSQNNNSA) are enriched in polar residues. The stretch at 145–146 (FG) is one FG 5 repeat. The segment covering 154-172 (GTSSLFGGQSTSTTGTFGN) has biased composition (low complexity). The stretch at 157–160 (SLFG) is one SLFG 7 repeat. The GLFG 3; approximate repeat unit spans residues 168–171 (GTFG). The SLFG 8; approximate repeat unit spans residues 175–178 (SSFG). The FG 6 repeat unit spans residues 189-190 (FG). Residues 190 to 394 (GAGNNSQSNT…NNQQQQSTGL (205 aa)) are disordered. The span at 192–245 (GNNSQSNTTGSLFGNQQSSAFGTNNQQGSLFGQQSQNTNNAFGNQNQLGGSSFG) shows a compositional bias: polar residues. Residues 202–205 (SLFG) form an SLFG 9 repeat. Residues 210 to 213 (SAFG) form an SLFG 10; approximate repeat. The stretch at 220-223 (SLFG) is one SLFG 11 repeat. The stretch at 233 to 234 (FG) is one FG 7 repeat. The SLFG 12; approximate repeat unit spans residues 242-245 (SSFG). An SLFG 13 repeat occupies 253-256 (SLFG). A compositionally biased stretch (low complexity) spans 259 to 293 (NNTLGNTTNNRNGLFGQMNSSNQGSSNSGLFGQNS). GLFG repeat units lie at residues 271–274 (GLFG) and 287–290 (GLFG). Residues 294–303 (MNSSTQGVFG) are compositionally biased toward polar residues. The GLFG 6; approximate repeat unit spans residues 300-303 (GVFG). Over residues 304–317 (QNNNQMQINGNNNN) the composition is skewed to low complexity. One copy of the SLFG 14 repeat lies at 318-321 (SLFG). GLFG repeat units follow at residues 333-336 (GLFG), 345-348 (GLFG), 358-361 (GLFG), 379-382 (GLFG), and 393-396 (GLFG). Positions 336 to 352 (GQNNQQQGSGLFGQNSQ) are enriched in low complexity. Polar residues predominate over residues 353 to 377 (TSGSSGLFGQNNQKQPNTFTQSNTG). 3 SLFG repeats span residues 405–408 (SLFG), 417–420 (SLFG), and 436–439 (SLFG). One copy of the FG 8 repeat lies at 448-449 (FG). The stretch at 462–465 (SLFG) is one SLFG 18 repeat. One copy of the SLFG 19; approximate repeat lies at 474-477 (SLFG). 3 GLFG repeats span residues 490-493 (GLFG), 506-509 (GLFG), and 523-526 (GLFG). The stretch at 542-543 (FG) is one FG 9 repeat. The GLFG 15 repeat unit spans residues 550 to 553 (GLFG). An FG 10 repeat occupies 569–570 (FG). 2 disordered regions span residues 672-697 (TLERSDRGSSTSNSITDPESSYLNSN) and 745-794 (DDQA…PMIE). Residues 679–697 (GSSTSNSITDPESSYLNSN) show a composition bias toward polar residues. Residues 757 to 775 (LTEKAHSPQTDLKDDHDES) show a composition bias toward basic and acidic residues. Residues Ser-763 and Ser-783 each carry the phosphoserine modification. A compositionally biased stretch (polar residues) spans 777–790 (PDPQSKSPNGSTSI). In terms of domain architecture, Peptidase S59 spans 814–956 (KNNYYISPSI…GTYSYTIDHP (143 aa)). The segment at 816–955 (NYYISPSIET…TGTYSYTIDH (140 aa)) is nucleoporin RNA-binding motif (NRM).

This sequence belongs to the nucleoporin GLFG family. As to quaternary structure, component of the nuclear pore complex (NPC). NPC constitutes the exclusive means of nucleocytoplasmic transport. NPCs allow the passive diffusion of ions and small molecules and the active, nuclear transport receptor-mediated bidirectional transport of macromolecules such as proteins, RNAs, ribonucleoparticles (RNPs), and ribosomal subunits across the nuclear envelope. Due to its 8-fold rotational symmetry, all subunits are present with 8 copies or multiples thereof. Through its FG repeats NUP100 interacts with numerous karyopherins including KAP95, and MEX67.

It is found in the nucleus. Its subcellular location is the nuclear pore complex. The protein localises to the nucleus membrane. Functionally, functions as a component of the nuclear pore complex (NPC). NPC components, collectively referred to as nucleoporins (NUPs), can play the role of both NPC structural components and of docking or interaction partners for transiently associated nuclear transport factors. Active directional transport is assured by both, a Phe-Gly (FG) repeat affinity gradient for these transport factors across the NPC and a transport cofactor concentration gradient across the nuclear envelope (GSP1 and GSP2 GTPases associated predominantly with GTP in the nucleus, with GDP in the cytoplasm). NUP100 plays an important role in several nuclear export and import pathways including poly(A)+ RNA and protein transport. This is Nucleoporin NUP100/NSP100 (NUP100) from Saccharomyces cerevisiae (strain ATCC 204508 / S288c) (Baker's yeast).